The sequence spans 269 residues: Surfeit locus protein 4 (269 aa).

5 helical membrane-spanning segments follow: residues L64–V84, Y92–W112, F179–F199, L203–W223, and F239–G259. The Di-lysine motif signature appears at K266 to W269.

It belongs to the SURF4 family. Found in a complex composed at least of SURF4, TMED2 and TMED10. May interact with LMAN1. Interacts with ZFYVE27 and with KIF5A in a ZFYVE27-dependent manner. Interacts with STING1. Interacts with SAR1B. Interacts with TMEM41B.

Its subcellular location is the endoplasmic reticulum membrane. The protein resides in the endoplasmic reticulum-Golgi intermediate compartment membrane. It localises to the golgi apparatus membrane. Its function is as follows. Endoplasmic reticulum cargo receptor that mediates the export of lipoproteins by recruiting cargos into COPII vesicles to facilitate their secretion. Acts as a cargo receptor for lipoproteins bearing both APOB and APOA1, thereby regulating lipoprotein delivery and the maintenance of lipid homeostasis. Synergizes with the GTPase SAR1B to mediate transport of circulating lipoproteins. Promotes the secretion of PCSK9. Also mediates the efficient secretion of erythropoietin (EPO). May also play a role in the maintenance of the architecture of the endoplasmic reticulum-Golgi intermediate compartment and of the Golgi. This is Surfeit locus protein 4 from Bos taurus (Bovine).